The sequence spans 588 residues: Progranulin (588 aa).

The signal sequence occupies residues 1-17 (MWILVSWLALVARLVAG). An N-linked (GlcNAc...) asparagine glycan is attached at Asn38. 12 disulfide bridges follow: Cys125–Cys138, Cys132–Cys148, Cys281–Cys293, Cys287–Cys303, Cys294–Cys311, Cys304–Cys318, Cys312–Cys325, Cys319–Cys332, Cys363–Cys375, Cys369–Cys385, Cys394–Cys407, and Cys401–Cys413. N-linked (GlcNAc...) asparagine glycosylation occurs at Asn372. Asn525 is a glycosylation site (N-linked (GlcNAc...) asparagine).

The protein belongs to the granulin family. As to quaternary structure, progranulin is secreted as a homodimer. Interacts with SLPI; interaction protects progranulin from proteolysis. Interacts (via region corresponding to granulin-7 peptide) with CTSD; stabilizes CTSD and increases its proteolytic activity. Interacts (via region corresponding to granulin-7 peptide) with SORT1; this interaction mediates endocytosis and lysosome delivery of progranulin; interaction occurs at the neuronal cell surface in a stressed nervous system. Interacts with PSAP; facilitates lysosomal delivery of progranulin from the extracellular space and the biosynthetic pathway. Forms a complex with PSAP and M6PR; PSAP bridges the binding between progranulin and M6PR. Forms a complex with PSAP and SORT1; progranulin bridges the interaction between PSAP and SORT1; facilitates lysosomal targeting of PSAP via SORT1; interaction enhances PSAP uptake in primary cortical neurons. Interacts (via regions corresponding to granulin-2 and granulin-7 peptides) with GBA1; this interaction prevents aggregation of GBA1-SCARB2 complex via interaction with HSPA1A upon stress. Interacts (via region corresponding to granulin-7 peptide) with HSPA1A; mediates recruitment of HSPA1A to GBA1 and prevents GBA1 aggregation in response to stress. Post-translationally, cleaved by ELANE; proteolysis is blocked by SLPI and is concentration- and time-dependent and induces CXCL8/IL-8 production; granulin-3 and granulin-4 are resistant to ELANE. Cleaved by CTSL in lysosome thus regulating the maturation and turnover of progranulin within the lysosome. As to expression, ubiquitous; most abundant in the spleen and several tissues of endocrine significance.

It is found in the secreted. The protein localises to the lysosome. Its function is as follows. Secreted protein that acts as a key regulator of lysosomal function and as a growth factor involved in inflammation, wound healing and cell proliferation. Regulates protein trafficking to lysosomes, and also the activity of lysosomal enzymes. Also facilitates the acidification of lysosomes, causing degradation of mature CTSD by CTSB. In addition, functions as a wound-related growth factor that acts directly on dermal fibroblasts and endothelial cells to promote division, migration and the formation of capillary-like tubule structures. Also promotes epithelial cell proliferation by blocking TNF-mediated neutrophil activation preventing release of oxidants and proteases. Moreover, modulates inflammation in neurons by preserving neurons survival, axonal outgrowth and neuronal integrity. In terms of biological role, inhibits epithelial cell proliferation and induces epithelial cells to secrete IL-8. Functionally, stabilizes CTSD through interaction with CTSD leading to maintain its aspartic-type peptidase activity. In Rattus norvegicus (Rat), this protein is Progranulin (Grn).